The following is a 427-amino-acid chain: ATP-sensitive inward rectifier potassium channel 12 (427 aa).

Topologically, residues 1 to 77 (MTASGRTNPY…LADMFTTCVD (77 aa)) are cytoplasmic. At Cys75 the chain carries S-nitrosocysteine. Residues 78-104 (IRWRYMLLIFSLAFLASWLLFGVIFWV) form a helical membrane-spanning segment. 2 residues coordinate a 1,2-diacyl-sn-glycero-3-phospho-(1D-myo-inositol-4,5-bisphosphate): Arg79 and Arg81. At 105–129 (IAVAHGDLEPAEAHGRTPCVLQVHG) the chain is on the extracellular side. Cys123 and Cys155 form a disulfide bridge. An intramembrane region (helical; Pore-forming) is located at residues 130–146 (FMAAFLFSIETQTTIGY). K(+)-binding residues include Thr143, Ile144, Gly145, and Tyr146. The Selectivity filter signature appears at 143-148 (TIGYGL). The Extracellular segment spans residues 147 to 155 (GLRCVTEEC). The chain crosses the membrane as a helical span at residues 156–183 (PVAVFMVVAQSIVGCIIDSFMIGAIMAK). A 1,2-diacyl-sn-glycero-3-phospho-(1D-myo-inositol-4,5-bisphosphate)-binding residues include Lys183 and Lys188. The Cytoplasmic portion of the chain corresponds to 184-427 (MARPKKRAQT…QRPYRRESEI (244 aa)). Residues 387-396 (DEEDEVDGEQ) show a composition bias toward acidic residues. The disordered stretch occupies residues 387 to 427 (DEEDEVDGEQDSLGPQARRDFDRPQAGTALEQRPYRRESEI). Positions 425 to 427 (SEI) match the PDZ-binding motif.

The protein belongs to the inward rectifier-type potassium channel (TC 1.A.2.1) family. KCNJ12 subfamily. Homotetramer. Forms heteromer with KCNJ4. Association, via its PDZ-recognition domain, with LIN7A, LIN7B, LIN7C, DLG1, CASK and APBA1 plays a key role in its localization and trafficking.

The protein localises to the membrane. It carries out the reaction K(+)(in) = K(+)(out). Activated by phosphatidylinositol 4,5-biphosphate (PtdIns(4,5)P2). PtdIns(4,5)P2 binding to the cytoplasmic side of the channel triggers a conformation change leading to channel opening. In terms of biological role, inward rectifying potassium channel that probably participates in controlling the resting membrane potential in electrically excitable cells. Probably participates in establishing action potential waveform and excitability of neuronal and muscle tissues. Inward rectifier potassium channels are characterized by a greater tendency to allow potassium to flow into the cell rather than out of it. Their voltage dependence is regulated by the concentration of extracellular potassium; as external potassium is raised, the voltage range of the channel opening shifts to more positive voltages. The inward rectification is mainly due to the blockage of outward current by internal magnesium. The sequence is that of ATP-sensitive inward rectifier potassium channel 12 (KCNJ12) from Bos taurus (Bovine).